Reading from the N-terminus, the 223-residue chain is Deoxyribose-phosphate aldolase (223 aa).

Asp-89 functions as the Proton donor/acceptor in the catalytic mechanism. The active-site Schiff-base intermediate with acetaldehyde is the Lys-152. Catalysis depends on Lys-181, which acts as the Proton donor/acceptor.

The protein belongs to the DeoC/FbaB aldolase family. DeoC type 1 subfamily.

Its subcellular location is the cytoplasm. The catalysed reaction is 2-deoxy-D-ribose 5-phosphate = D-glyceraldehyde 3-phosphate + acetaldehyde. The protein operates within carbohydrate degradation; 2-deoxy-D-ribose 1-phosphate degradation; D-glyceraldehyde 3-phosphate and acetaldehyde from 2-deoxy-alpha-D-ribose 1-phosphate: step 2/2. Functionally, catalyzes a reversible aldol reaction between acetaldehyde and D-glyceraldehyde 3-phosphate to generate 2-deoxy-D-ribose 5-phosphate. This Bacillus cereus (strain AH187) protein is Deoxyribose-phosphate aldolase.